We begin with the raw amino-acid sequence, 321 residues long: Ribonucleoside-diphosphate reductase small subunit (321 aa).

Asp78, Glu108, and His111 together coordinate Fe cation. Residue Tyr115 is part of the active site. The chain crosses the membrane as a helical span at residues 165–185 (ILMILIEGLFFASSFASIAYL). Residues Glu171, Glu205, and His208 each contribute to the Fe cation site.

This sequence belongs to the ribonucleoside diphosphate reductase small chain family. As to quaternary structure, heterotetramer composed of a homodimer of the large subunit (R1) and a homodimer of the small subunit (R2). Larger multisubunit protein complex are also active, composed of (R1)n(R2)n. The cofactor is Fe cation.

The protein resides in the host membrane. It carries out the reaction a 2'-deoxyribonucleoside 5'-diphosphate + [thioredoxin]-disulfide + H2O = a ribonucleoside 5'-diphosphate + [thioredoxin]-dithiol. Functionally, ribonucleoside-diphosphate reductase holoenzyme provides the precursors necessary for viral DNA synthesis. Allows virus growth in non-dividing cells, as well as reactivation from latency in infected hosts. Catalyzes the biosynthesis of deoxyribonucleotides from the corresponding ribonucleotides. The sequence is that of Ribonucleoside-diphosphate reductase small subunit from Equus caballus (Horse).